We begin with the raw amino-acid sequence, 209 residues long: Ribosomal RNA large subunit methyltransferase E (209 aa).

S-adenosyl-L-methionine is bound by residues Gly-63, Trp-65, Asp-83, Asp-99, and Asp-124. The active-site Proton acceptor is the Lys-164.

The protein belongs to the class I-like SAM-binding methyltransferase superfamily. RNA methyltransferase RlmE family.

The protein resides in the cytoplasm. The catalysed reaction is uridine(2552) in 23S rRNA + S-adenosyl-L-methionine = 2'-O-methyluridine(2552) in 23S rRNA + S-adenosyl-L-homocysteine + H(+). Specifically methylates the uridine in position 2552 of 23S rRNA at the 2'-O position of the ribose in the fully assembled 50S ribosomal subunit. This Yersinia pseudotuberculosis serotype O:1b (strain IP 31758) protein is Ribosomal RNA large subunit methyltransferase E.